The following is a 260-amino-acid chain: Electron transfer flavoprotein subunit beta (260 aa).

This sequence belongs to the ETF beta-subunit/FixA family. Heterodimer of an alpha and a beta subunit. FAD serves as cofactor. It depends on AMP as a cofactor.

In terms of biological role, the electron transfer flavoprotein serves as a specific electron acceptor for other dehydrogenases. It transfers the electrons to the main respiratory chain via ETF-ubiquinone oxidoreductase (ETF dehydrogenase). This Thermoanaerobacterium thermosaccharolyticum (strain ATCC 7956 / DSM 571 / NCIMB 9385 / NCA 3814 / NCTC 13789 / WDCM 00135 / 2032) (Clostridium thermosaccharolyticum) protein is Electron transfer flavoprotein subunit beta (etfB).